Reading from the N-terminus, the 328-residue chain is Carbonic anhydrase-related protein 11 (328 aa).

An N-terminal signal peptide occupies residues 1–22 (MGAAARLSAPRALVLWAALGAA). The Alpha-carbonic anhydrase domain maps to 33–303 (DWWSYKDNLQ…LAHRALRGNR (271 aa)). 3 N-linked (GlcNAc...) asparagine glycosylation sites follow: Asn118, Asn170, and Asn260. The interval 300-328 (RGNRDPRHPERRCRGPNYRLHVDGAPHGR) is disordered. Over residues 319–328 (LHVDGAPHGR) the composition is skewed to basic and acidic residues.

The protein belongs to the alpha-carbonic anhydrase family.

It is found in the secreted. In terms of biological role, does not have a catalytic activity. This Bos taurus (Bovine) protein is Carbonic anhydrase-related protein 11 (CA11).